Here is a 175-residue protein sequence, read N- to C-terminus: Adenine phosphoribosyltransferase (175 aa).

Belongs to the purine/pyrimidine phosphoribosyltransferase family. As to quaternary structure, homodimer.

It localises to the cytoplasm. The catalysed reaction is AMP + diphosphate = 5-phospho-alpha-D-ribose 1-diphosphate + adenine. Its pathway is purine metabolism; AMP biosynthesis via salvage pathway; AMP from adenine: step 1/1. Catalyzes a salvage reaction resulting in the formation of AMP, that is energically less costly than de novo synthesis. The polypeptide is Adenine phosphoribosyltransferase (Lactobacillus johnsonii (strain CNCM I-12250 / La1 / NCC 533)).